The sequence spans 631 residues: Eukaryotic translation initiation factor 2-alpha kinase 1 (631 aa).

The interval 1–34 (MQGGNSGVRKREEEGGGEGAVAAPPAIDFPAESS) is disordered. Positions 85 to 104 (LRSRQVFKLLCQTFIKMGLL) match the SIFI-degron motif. The Protein kinase domain maps to 167 to 583 (FEEVAILGKG…AVQLLQSELF (417 aa)). ATP-binding positions include 173–181 (LGKGGYGRV) and K196. The interval 260 to 301 (QEEDREQYDVKNDESSSSSIVFAEPTPEKGKRFGESDTENQN) is disordered. Residue T285 is modified to Phosphothreonine. Residues 285–301 (TPEKGKRFGESDTENQN) show a composition bias toward basic and acidic residues. The HRM 1 repeat unit spans residues 410 to 415 (ACPYVM). D442 acts as the Proton acceptor in catalysis. T486 and T488 each carry phosphothreonine; by autocatalysis. T493 is modified (phosphothreonine). One copy of the HRM 2 repeat lies at 552-557 (RCPVQA).

The protein belongs to the protein kinase superfamily. Ser/Thr protein kinase family. GCN2 subfamily. As to quaternary structure, synthesized in an inactive form that binds to the N-terminal domain of CDC37. Has to be associated with a multiprotein complex containing Hsp90, CDC37 and PPP5C for maturation and activation by autophosphorylation. The phosphatase PPP5C modulates this activation. Homodimer; homodimerizes in presence of heme, forming a disulfide-linked inactive homodimer. Interacts with DELE1; binds both to full-length DELE1 and processed form of DELE1 (S-DELE1) in response to stress, leading to activate its protein kinase activity and trigger the integrated stress response (ISR). Post-translationally, activated by autophosphorylation; phosphorylated predominantly on serine and threonine residues, but also on tyrosine residues. Autophosphorylation at Thr-488 is required for kinase activation. The active autophosphorylated form apparently is largely refractory to cellular heme fluctuations. Ubiquitinated and degraded by the SIFI complex once the mitochondrial stress has been resolved, thereby providing stress response silencing. Within the SIFI complex, UBR4 initiates ubiquitin chain that are further elongated or branched by KCMF1.

It is found in the cytoplasm. It carries out the reaction L-seryl-[protein] + ATP = O-phospho-L-seryl-[protein] + ADP + H(+). It catalyses the reaction L-threonyl-[protein] + ATP = O-phospho-L-threonyl-[protein] + ADP + H(+). In normal conditions, the protein kinase activity is inhibited; inhibition is relieved by various stress conditions. Inhibited by heme: in presence of heme, forms a disulfide-linked inactive homodimer. Heme depletion relieves inhibition and stimulates kinase activity by autophosphorylation. Inhibited by the heme metabolites biliverdin and bilirubin. Induced by oxidative stress generated by arsenite treatment. Binding of nitric oxide (NO) to the heme iron in the N-terminal heme-binding domain activates the kinase activity, while binding of carbon monoxide (CO) suppresses kinase activity. Protein kinase activity is also activated upon binding to DELE1 in response to various stress, triggering the integrated stress response (ISR): activated by full-length DELE1 in response to iron deficiency, while it is activated by the processed form of DELE1 (S-DELE1) in response to mitochondrial stress. In terms of biological role, metabolic-stress sensing protein kinase that phosphorylates the alpha subunit of eukaryotic translation initiation factor 2 (EIF2S1/eIF-2-alpha) in response to various stress conditions. Key activator of the integrated stress response (ISR) required for adaptation to various stress, such as heme deficiency, oxidative stress, osmotic shock, mitochondrial dysfunction and heat shock. EIF2S1/eIF-2-alpha phosphorylation in response to stress converts EIF2S1/eIF-2-alpha in a global protein synthesis inhibitor, leading to a global attenuation of cap-dependent translation, while concomitantly initiating the preferential translation of ISR-specific mRNAs, such as the transcriptional activator ATF4, and hence allowing ATF4-mediated reprogramming. Acts as a key sensor of heme-deficiency: in normal conditions, binds hemin via a cysteine thiolate and histidine nitrogenous coordination, leading to inhibit the protein kinase activity. This binding occurs with moderate affinity, allowing it to sense the heme concentration within the cell: heme depletion relieves inhibition and stimulates kinase activity, activating the ISR. Thanks to this unique heme-sensing capacity, plays a crucial role to shut off protein synthesis during acute heme-deficient conditions. In red blood cells (RBCs), controls hemoglobin synthesis ensuring a coordinated regulation of the synthesis of its heme and globin moieties. It thereby plays an essential protective role for RBC survival in anemias of iron deficiency. Iron deficiency also triggers activation by full-length DELE1. Also activates the ISR in response to mitochondrial dysfunction: HRI/EIF2AK1 protein kinase activity is activated upon binding to the processed form of DELE1 (S-DELE1), thereby promoting the ATF4-mediated reprogramming. Also acts as an activator of mitophagy in response to mitochondrial damage: catalyzes phosphorylation of eIF-2-alpha (EIF2S1) following activation by S-DELE1, thereby promoting mitochondrial localization of EIF2S1, triggering PRKN-independent mitophagy. The chain is Eukaryotic translation initiation factor 2-alpha kinase 1 from Macaca fascicularis (Crab-eating macaque).